We begin with the raw amino-acid sequence, 426 residues long: Tryptophan synthase beta chain (426 aa).

Lys108 is subject to N6-(pyridoxal phosphate)lysine.

The protein belongs to the TrpB family. In terms of assembly, tetramer of two alpha and two beta chains. Requires pyridoxal 5'-phosphate as cofactor.

The catalysed reaction is (1S,2R)-1-C-(indol-3-yl)glycerol 3-phosphate + L-serine = D-glyceraldehyde 3-phosphate + L-tryptophan + H2O. The protein operates within amino-acid biosynthesis; L-tryptophan biosynthesis; L-tryptophan from chorismate: step 5/5. The beta subunit is responsible for the synthesis of L-tryptophan from indole and L-serine. The polypeptide is Tryptophan synthase beta chain (trpB) (Thermoplasma volcanium (strain ATCC 51530 / DSM 4299 / JCM 9571 / NBRC 15438 / GSS1)).